We begin with the raw amino-acid sequence, 472 residues long: N(6)-adenine-specific methyltransferase METTL4 (472 aa).

The protein belongs to the MT-A70-like family.

Its subcellular location is the nucleus. The protein resides in the cytoplasm. The protein localises to the cytosol. It localises to the mitochondrion matrix. It carries out the reaction a 2'-O-methyladenosine in U2 snRNA + S-adenosyl-L-methionine = an N(6)-methyl-2'-O-methyladenosine in U2 snRNA + S-adenosyl-L-homocysteine + H(+). The enzyme catalyses a 2'-deoxyadenosine in DNA + S-adenosyl-L-methionine = an N(6)-methyl-2'-deoxyadenosine in DNA + S-adenosyl-L-homocysteine + H(+). Its function is as follows. N(6)-adenine-specific methyltransferase that can methylate both RNAs and DNA. Acts as a N(6)-adenine-specific RNA methyltransferase by catalyzing formation of N6,2'-O-dimethyladenosine (m6A(m)) on internal positions of U2 small nuclear RNA (snRNA): methylates the 6th position of adenine residues with a pre-deposited 2'-O-methylation. Internal m6A(m) methylation of snRNAs regulates RNA splicing. Also able to act as a N(6)-adenine-specific DNA methyltransferase by mediating methylation of DNA on the 6th position of adenine (N(6)-methyladenosine). The existence of N(6)-methyladenosine (m6A) on DNA is however unclear in mammals, and additional evidences are required to confirm the role of the N(6)-adenine-specific DNA methyltransferase activity of METTL4 in vivo. Acts as a regulator of mitochondrial transcript levels and mitochondrial DNA (mtDNA) copy number by mediating mtDNA N(6)-methylation: m6A on mtDNA reduces transcription by repressing TFAM DNA-binding and bending. N(6)-methyladenosine deposition by METTL4 regulates Polycomb silencing by triggering ubiquitination and degradation of sensor proteins ASXL1 and MPND, leading to inactivation of the PR-DUB complex and subsequent preservation of Polycomb silencing. The polypeptide is N(6)-adenine-specific methyltransferase METTL4 (Homo sapiens (Human)).